A 291-amino-acid chain; its full sequence is MADLDDIKDGKDFGIDIPQKNSLFELKGCGALDWGMQSRLSRIFNPKTNRTVMLAFDHGYFQGPTTGLERIDINIAPLFPHTDVLMCTRGILRSQVPPATNKPVVLRASGANSILTELSNEAVAVAMEDALRLNVCAVAAQVYIGSEYEHQSIKNIIKLVDQGMRYGMPTMAVTGVGKDMVRDQRYFSLATRIAAEMGAQIIKTYYVDTGFERIASGCPVPIVIAGGKKLPEKEALEMCYQAIDQGAAGVDMGRNIFQSEAPVAMLKAVQAVVHQNENASKAYELFLSEKQ.

Residue Lys-203 is the Schiff-base intermediate with substrate of the active site.

The protein belongs to the DeoC/FbaB aldolase family. Homodecamer.

Its subcellular location is the cytoplasm. The enzyme catalyses dihydroxyacetone phosphate + acetyl-CoA = 3-hydroxy-2,4-dioxopentyl phosphate + CoA. Involved in the degradation of phospho-AI-2, thereby terminating induction of the lsr operon and closing the AI-2 signaling cycle. Catalyzes the transfer of an acetyl moiety from 3-hydroxy-5-phosphonooxypentane-2,4-dione to CoA to form glycerone phosphate and acetyl-CoA. This Photorhabdus laumondii subsp. laumondii (strain DSM 15139 / CIP 105565 / TT01) (Photorhabdus luminescens subsp. laumondii) protein is 3-hydroxy-5-phosphonooxypentane-2,4-dione thiolase.